The chain runs to 473 residues: Homeobox protein ATH1 (473 aa).

The segment at 205-221 is SR/KY domain; it reads SKYLHSVQEILSHFAAY. A BELL domain region spans residues 266–336; that stretch reads QRRALEAKKT…NLRERICKKI (71 aa). Residues 372–434 constitute a DNA-binding region (homeobox); it reads IWRPQRGLPE…NARVRLWKPM (63 aa). A disordered region spans residues 448 to 473; the sequence is NNSHIQPNGPTLRMPKSVMMSQAMHK.

Belongs to the TALE/BELL homeobox family. In terms of assembly, may form heterodimeric complex with the TALE/KNOX protein STM. In terms of tissue distribution, most abundant in flowers.

It localises to the nucleus. Functionally, transcription factor which may be involved in the signal transduction pathway downstream of the COP1 gene. Controls floral competency as a specific activator of FLC expression. Is responsive of the nuclear import of SHOOT MERISTEMLESS (STM). This chain is Homeobox protein ATH1 (ATH1), found in Arabidopsis thaliana (Mouse-ear cress).